The sequence spans 832 residues: Disintegrin and metalloproteinase domain-containing protein 23 (832 aa).

Positions 1 to 10 (MKPPGSSSRQ) are enriched in polar residues. The segment at 1–37 (MKPPGSSSRQPPLAGCSLAGASCGPQRGPAGSVPASA) is disordered. An N-terminal signal peptide occupies residues 1–59 (MKPPGSSSRQPPLAGCSLAGASCGPQRGPAGSVPASAPARTPPCRLLLVLLLLPPLAAS). Low complexity predominate over residues 28 to 37 (GPAGSVPASA). The propeptide occupies 60 to 286 (SRPRAWGAAA…ELQWLKRRKR (227 aa)). Asparagine 76, asparagine 96, asparagine 100, and asparagine 263 each carry an N-linked (GlcNAc...) asparagine glycan. The Extracellular segment spans residues 287 to 792 (AVNPSRGIFE…EGPKGPSATN (506 aa)). The Peptidase M12B domain occupies 299–496 (KYLELMIVND…GGGACLFNRP (198 aa)). Cystine bridges form between cysteine 408–cysteine 491, cysteine 450–cysteine 475, and cysteine 452–cysteine 459. Residues 502-588 (PTECGNGYVE…QCPPNLHKQD (87 aa)) enclose the Disintegrin domain. 2 N-linked (GlcNAc...) asparagine glycosylation sites follow: asparagine 547 and asparagine 548. A disulfide bond links cysteine 560 and cysteine 580. Residues 563-568 (AVNECD) form a may bind the integrin receptor region. N-linked (GlcNAc...) asparagine glycosylation is found at asparagine 664 and asparagine 732. In terms of domain architecture, EGF-like spans 732-769 (NMSSCPLDSKGKVCSGHGVCSNEATCICDFTWAGTDCS). Intrachain disulfides connect cysteine 736/cysteine 751, cysteine 745/cysteine 757, and cysteine 759/cysteine 768. A helical membrane pass occupies residues 793–813 (LIIGSIAGAILVAAIVLGGTG). Residues 814–832 (WGFKNVKKRRFDPTQQGPI) are Cytoplasmic-facing.

Can bind to LGI1 and LGI4. Ligand for integrin alpha-V/beta-3. Highly expressed in the brain and weakly expressed in the heart. In the brain, expressed prominently in the amygdala, caudate nucleus, hypothalamus, thalamus, cerebral cortex and occipital pole.

Its subcellular location is the cell membrane. The protein resides in the secreted. In terms of biological role, may play a role in cell-cell and cell-matrix interactions. This is a non-catalytic metalloprotease-like protein. The chain is Disintegrin and metalloproteinase domain-containing protein 23 (ADAM23) from Homo sapiens (Human).